The following is a 512-amino-acid chain: Dihydroniloticin synthase CYP71CD1 (512 aa).

Residues 7-27 (YFTVTSLLVFLTFLLRLVWGW) form a helical membrane-spanning segment. Residue Cys-451 coordinates heme.

Belongs to the cytochrome P450 family. Heme is required as a cofactor. Accumulates in mature fruits and in juice vesicles.

The protein resides in the membrane. The enzyme catalyses tirucalla-7,24-dien-3beta-ol + 2 reduced [NADPH--hemoprotein reductase] + 2 O2 = dihydroniloticin + 2 oxidized [NADPH--hemoprotein reductase] + 2 H2O + 2 H(+). Its pathway is secondary metabolite biosynthesis; terpenoid biosynthesis. In terms of biological role, monooxygenase involved in the biosynthesis of limonoids triterpene natural products such as limonin, a compound with insecticidal activity responsible for the bitter taste in citrus. Catalyzes the conversion of tirucalladienol to dihydroniloticin. The polypeptide is Dihydroniloticin synthase CYP71CD1 (Citrus sinensis (Sweet orange)).